Consider the following 157-residue polypeptide: SsrA-binding protein (157 aa).

This sequence belongs to the SmpB family.

The protein resides in the cytoplasm. Its function is as follows. Required for rescue of stalled ribosomes mediated by trans-translation. Binds to transfer-messenger RNA (tmRNA), required for stable association of tmRNA with ribosomes. tmRNA and SmpB together mimic tRNA shape, replacing the anticodon stem-loop with SmpB. tmRNA is encoded by the ssrA gene; the 2 termini fold to resemble tRNA(Ala) and it encodes a 'tag peptide', a short internal open reading frame. During trans-translation Ala-aminoacylated tmRNA acts like a tRNA, entering the A-site of stalled ribosomes, displacing the stalled mRNA. The ribosome then switches to translate the ORF on the tmRNA; the nascent peptide is terminated with the 'tag peptide' encoded by the tmRNA and targeted for degradation. The ribosome is freed to recommence translation, which seems to be the essential function of trans-translation. The sequence is that of SsrA-binding protein from Chlorobaculum tepidum (strain ATCC 49652 / DSM 12025 / NBRC 103806 / TLS) (Chlorobium tepidum).